Consider the following 95-residue polypeptide: Small ribosomal subunit protein bS6 (95 aa).

This sequence belongs to the bacterial ribosomal protein bS6 family.

In terms of biological role, binds together with bS18 to 16S ribosomal RNA. This Halalkalibacterium halodurans (strain ATCC BAA-125 / DSM 18197 / FERM 7344 / JCM 9153 / C-125) (Bacillus halodurans) protein is Small ribosomal subunit protein bS6 (rpsF).